Here is a 548-residue protein sequence, read N- to C-terminus: 2-succinyl-5-enolpyruvyl-6-hydroxy-3-cyclohexene-1-carboxylate synthase (548 aa).

Belongs to the TPP enzyme family. MenD subfamily. As to quaternary structure, homodimer. The cofactor is Mg(2+). Mn(2+) is required as a cofactor. Requires thiamine diphosphate as cofactor.

It catalyses the reaction isochorismate + 2-oxoglutarate + H(+) = 5-enolpyruvoyl-6-hydroxy-2-succinyl-cyclohex-3-ene-1-carboxylate + CO2. It functions in the pathway quinol/quinone metabolism; 1,4-dihydroxy-2-naphthoate biosynthesis; 1,4-dihydroxy-2-naphthoate from chorismate: step 2/7. Its pathway is quinol/quinone metabolism; menaquinone biosynthesis. Functionally, catalyzes the thiamine diphosphate-dependent decarboxylation of 2-oxoglutarate and the subsequent addition of the resulting succinic semialdehyde-thiamine pyrophosphate anion to isochorismate to yield 2-succinyl-5-enolpyruvyl-6-hydroxy-3-cyclohexene-1-carboxylate (SEPHCHC). The sequence is that of 2-succinyl-5-enolpyruvyl-6-hydroxy-3-cyclohexene-1-carboxylate synthase from Mycobacterium ulcerans (strain Agy99).